The primary structure comprises 126 residues: Large ribosomal subunit protein bL19 (126 aa).

This sequence belongs to the bacterial ribosomal protein bL19 family.

In terms of biological role, this protein is located at the 30S-50S ribosomal subunit interface and may play a role in the structure and function of the aminoacyl-tRNA binding site. This is Large ribosomal subunit protein bL19 from Bordetella bronchiseptica (strain ATCC BAA-588 / NCTC 13252 / RB50) (Alcaligenes bronchisepticus).